Here is a 228-residue protein sequence, read N- to C-terminus: Ephrin-A5 (228 aa).

The N-terminal stretch at 1 to 20 (MPHVEMLLLAVAALWVCVRG) is a signal peptide. The Ephrin RBD domain maps to 29–162 (ADRYAVYWNS…KLKVFVRPAN (134 aa)). N-linked (GlcNAc...) asparagine glycosylation occurs at Asn-37. 2 disulfide bridges follow: Cys-62-Cys-102 and Cys-90-Cys-151. Residue Asn-203 is the site of GPI-anchor amidated asparagine attachment. The propeptide at 204–228 (AAQTPRIPIRLLATLLFLLAMLLIL) is removed in mature form.

Belongs to the ephrin family. Expressed in a graded fashion across the tectum being more strongly expressed towards the posterior pole.

The protein localises to the cell membrane. Its function is as follows. Cell surface GPI-bound ligand for Eph receptors, a family of receptor tyrosine kinases which are crucial for migration, repulsion and adhesion during neuronal, vascular and epithelial development. Binds promiscuously Eph receptors residing on adjacent cells, leading to contact-dependent bidirectional signaling into neighboring cells. Induces compartmentalized signaling within a caveolae-like membrane microdomain when bound to the extracellular domain of its cognate receptor. This signaling event requires the activity of the Fyn tyrosine kinase. Activates the EPHA3 receptor to regulate cell-cell adhesion and cytoskeletal organization. With the receptor EPHA2 may regulate lens fiber cells shape and interactions and be important for lens transparency maintenance. May function actively to stimulate axon fasciculation. Induces growth cone collapse and repulsion of retinal ganglion cell axons. The protein is Ephrin-A5 (EFNA5) of Gallus gallus (Chicken).